The primary structure comprises 302 residues: Pyridoxal 5'-phosphate synthase subunit PdxS (302 aa).

Aspartate 32 contributes to the D-ribose 5-phosphate binding site. The active-site Schiff-base intermediate with D-ribose 5-phosphate is the lysine 89. Glycine 161 is a D-ribose 5-phosphate binding site. Residue arginine 173 coordinates D-glyceraldehyde 3-phosphate. Residues glycine 222 and glycine 243–serine 244 contribute to the D-ribose 5-phosphate site. The disordered stretch occupies residues alanine 276–asparagine 302.

This sequence belongs to the PdxS/SNZ family. In terms of assembly, in the presence of PdxT, forms a dodecamer of heterodimers.

It carries out the reaction aldehydo-D-ribose 5-phosphate + D-glyceraldehyde 3-phosphate + L-glutamine = pyridoxal 5'-phosphate + L-glutamate + phosphate + 3 H2O + H(+). The protein operates within cofactor biosynthesis; pyridoxal 5'-phosphate biosynthesis. Functionally, catalyzes the formation of pyridoxal 5'-phosphate from ribose 5-phosphate (RBP), glyceraldehyde 3-phosphate (G3P) and ammonia. The ammonia is provided by the PdxT subunit. Can also use ribulose 5-phosphate and dihydroxyacetone phosphate as substrates, resulting from enzyme-catalyzed isomerization of RBP and G3P, respectively. This Halobacterium salinarum (strain ATCC 29341 / DSM 671 / R1) protein is Pyridoxal 5'-phosphate synthase subunit PdxS.